The sequence spans 886 residues: Isoleucine--tRNA ligase (886 aa).

The short motif at 60–70 (PYANGDIHIGH) is the 'HIGH' region element. Glu-546 contributes to the L-isoleucyl-5'-AMP binding site. A 'KMSKS' region motif is present at residues 587–591 (KMSKS). Residue Lys-590 participates in ATP binding. Zn(2+) is bound by residues Cys-856, Cys-859, Cys-870, and Cys-873.

It belongs to the class-I aminoacyl-tRNA synthetase family. IleS type 1 subfamily. In terms of assembly, monomer. It depends on Zn(2+) as a cofactor.

The protein resides in the cytoplasm. It catalyses the reaction tRNA(Ile) + L-isoleucine + ATP = L-isoleucyl-tRNA(Ile) + AMP + diphosphate. Functionally, catalyzes the attachment of isoleucine to tRNA(Ile). As IleRS can inadvertently accommodate and process structurally similar amino acids such as valine, to avoid such errors it has two additional distinct tRNA(Ile)-dependent editing activities. One activity is designated as 'pretransfer' editing and involves the hydrolysis of activated Val-AMP. The other activity is designated 'posttransfer' editing and involves deacylation of mischarged Val-tRNA(Ile). This Mesomycoplasma hyopneumoniae (strain 232) (Mycoplasma hyopneumoniae) protein is Isoleucine--tRNA ligase.